We begin with the raw amino-acid sequence, 218 residues long: Small ribosomal subunit protein uS3c (218 aa).

Residues 47-118 (VQKNIRISSG…KLNIAITRIT (72 aa)) form the KH type-2 domain.

This sequence belongs to the universal ribosomal protein uS3 family. In terms of assembly, part of the 30S ribosomal subunit.

The protein resides in the plastid. Its subcellular location is the chloroplast. The polypeptide is Small ribosomal subunit protein uS3c (rps3) (Vitis vinifera (Grape)).